The primary structure comprises 500 residues: UDP-N-acetylmuramoyl-L-alanyl-D-glutamate--2,6-diaminopimelate ligase (500 aa).

Residue Ser-32 participates in UDP-N-acetyl-alpha-D-muramoyl-L-alanyl-D-glutamate binding. 117 to 123 lines the ATP pocket; that stretch reads GTNGKTT. Residues 159–160, Ser-186, Gln-192, and Arg-194 each bind UDP-N-acetyl-alpha-D-muramoyl-L-alanyl-D-glutamate; that span reads TT. An N6-carboxylysine modification is found at Lys-226. Meso-2,6-diaminopimelate contacts are provided by residues Arg-395, 419 to 422, Gly-470, and Glu-474; that span reads DNPR. Residues 419–422 carry the Meso-diaminopimelate recognition motif motif; sequence DNPR.

The protein belongs to the MurCDEF family. MurE subfamily. It depends on Mg(2+) as a cofactor. Post-translationally, carboxylation is probably crucial for Mg(2+) binding and, consequently, for the gamma-phosphate positioning of ATP.

It localises to the cytoplasm. It catalyses the reaction UDP-N-acetyl-alpha-D-muramoyl-L-alanyl-D-glutamate + meso-2,6-diaminopimelate + ATP = UDP-N-acetyl-alpha-D-muramoyl-L-alanyl-gamma-D-glutamyl-meso-2,6-diaminopimelate + ADP + phosphate + H(+). It functions in the pathway cell wall biogenesis; peptidoglycan biosynthesis. Functionally, catalyzes the addition of meso-diaminopimelic acid to the nucleotide precursor UDP-N-acetylmuramoyl-L-alanyl-D-glutamate (UMAG) in the biosynthesis of bacterial cell-wall peptidoglycan. This is UDP-N-acetylmuramoyl-L-alanyl-D-glutamate--2,6-diaminopimelate ligase from Parasynechococcus marenigrum (strain WH8102).